Reading from the N-terminus, the 49-residue chain is Osteocalcin (49 aa).

Positions 1–47 (YLDPGLGAPAPYPDPLEPKREVCELNPDCDELADHIGFQEAYRRFYG) constitute a Gla domain. The residue at position 9 (proline 9) is a Hydroxyproline. Ca(2+)-binding residues include glutamate 17, glutamate 21, glutamate 24, and aspartate 30. 4-carboxyglutamate occurs at positions 17, 21, and 24. A disulfide bridge links cysteine 23 with cysteine 29.

Belongs to the osteocalcin/matrix Gla protein family. Post-translationally, gamma-carboxyglutamate residues are formed by vitamin K dependent carboxylation by GGCX. These residues are essential for the binding of calcium. Decarboxylation promotes the hormone activity.

It is found in the secreted. The carboxylated form is one of the main organic components of the bone matrix, which constitutes 1-2% of the total bone protein. It acts as a negative regulator of bone formation and is required to limit bone formation without impairing bone resorption or mineralization. The carboxylated form binds strongly to apatite and calcium. Functionally, the uncarboxylated form acts as a hormone secreted by osteoblasts, which regulates different cellular processes, such as energy metabolism, male fertility and brain development. Regulates of energy metabolism by acting as a hormone favoring pancreatic beta-cell proliferation, insulin secretion and sensitivity and energy expenditure. Uncarboxylated osteocalcin hormone also promotes testosterone production in the testes: acts as a ligand for G protein-coupled receptor GPRC6A at the surface of Leydig cells, initiating a signaling response that promotes the expression of enzymes required for testosterone synthesis in a CREB-dependent manner. Also acts as a regulator of brain development: osteocalcin hormone crosses the blood-brain barrier and acts as a ligand for GPR158 on neurons, initiating a signaling response that prevents neuronal apoptosis in the hippocampus, favors the synthesis of all monoamine neurotransmitters and inhibits that of gamma-aminobutyric acid (GABA). Osteocalcin also crosses the placenta during pregnancy and maternal osteocalcin is required for fetal brain development. This Capra hircus (Goat) protein is Osteocalcin (BGLAP).